The sequence spans 741 residues: Cysteine--tRNA ligase, cytoplasmic (741 aa).

A Zn(2+)-binding site is contributed by cysteine 46. The 'HIGH' region signature appears at 48–58 (PTVYDASHMGH). Serine 297 carries the phosphoserine modification. Zn(2+)-binding residues include cysteine 340, histidine 365, and glutamate 369. Residues 398–402 (KMSKS) carry the 'KMSKS' region motif. Lysine 401 serves as a coordination point for ATP. The tract at residues 697 to 718 (FDENGLPTHDKEGKEVSKGQIK) is disordered. Over residues 704-713 (THDKEGKEVS) the composition is skewed to basic and acidic residues.

The protein belongs to the class-I aminoacyl-tRNA synthetase family. Requires Zn(2+) as cofactor.

Its subcellular location is the cytoplasm. The catalysed reaction is tRNA(Cys) + L-cysteine + ATP = L-cysteinyl-tRNA(Cys) + AMP + diphosphate. This chain is Cysteine--tRNA ligase, cytoplasmic, found in Drosophila melanogaster (Fruit fly).